The following is a 334-amino-acid chain: Protein-methionine-sulfoxide reductase catalytic subunit MsrP (334 aa).

Residues 1–44 constitute a signal peptide (tat-type signal); it reads MKKNQFLKESDVTAESVFFMKRRQVLKALGISAAAFSLPHAAHA. Residues asparagine 88, 91 to 92, cysteine 146, threonine 181, asparagine 233, arginine 238, and 249 to 251 contribute to the Mo-molybdopterin site; these read YE and GIK.

It belongs to the MsrP family. Heterodimer of a catalytic subunit (MsrP) and a heme-binding subunit (MsrQ). Mo-molybdopterin serves as cofactor. In terms of processing, predicted to be exported by the Tat system. The position of the signal peptide cleavage has not been experimentally proven.

The protein resides in the periplasm. The enzyme catalyses L-methionyl-[protein] + a quinone + H2O = L-methionyl-(S)-S-oxide-[protein] + a quinol. It catalyses the reaction L-methionyl-[protein] + a quinone + H2O = L-methionyl-(R)-S-oxide-[protein] + a quinol. Functionally, part of the MsrPQ system that repairs oxidized periplasmic proteins containing methionine sulfoxide residues (Met-O), using respiratory chain electrons. Thus protects these proteins from oxidative-stress damage caused by reactive species of oxygen and chlorine generated by the host defense mechanisms. MsrPQ is essential for the maintenance of envelope integrity under bleach stress, rescuing a wide series of structurally unrelated periplasmic proteins from methionine oxidation, including the primary periplasmic chaperone SurA and the lipoprotein Pal. The catalytic subunit MsrP is non-stereospecific, being able to reduce both (R-) and (S-) diastereoisomers of methionine sulfoxide. In Escherichia coli O7:K1 (strain IAI39 / ExPEC), this protein is Protein-methionine-sulfoxide reductase catalytic subunit MsrP.